A 406-amino-acid chain; its full sequence is COP9 signalosome complex subunit 4 (406 aa).

N-acetylalanine is present on A2. K25 carries the post-translational modification N6-acetyllysine. A PCI domain is found at Y197 to A366.

This sequence belongs to the CSN4 family. Component of the CSN complex, composed of COPS1/GPS1, COPS2, COPS3, COPS4, COPS5, COPS6, COPS7 (COPS7A or COPS7B), COPS8 and COPS9. In the complex, it probably interacts directly with COPS1, COPS2, COPS3, COPS5, COPS6, COPS7 (COPS7A or COPS7B) and COPS8. Interacts with TOR1A; the interaction is direct and associates TOR1A and SNAPIN with the CSN complex. Interacts with STON2; controls STON2 neddylation levels. Interacts with ERCC6.

The protein resides in the cytoplasm. Its subcellular location is the nucleus. It localises to the cytoplasmic vesicle. It is found in the secretory vesicle. The protein localises to the synaptic vesicle. Component of the COP9 signalosome complex (CSN), a complex involved in various cellular and developmental processes. The CSN complex is an essential regulator of the ubiquitin (Ubl) conjugation pathway by mediating the deneddylation of the cullin subunits of SCF-type E3 ligase complexes, leading to decrease the Ubl ligase activity of SCF-type complexes such as SCF, CSA or DDB2. Also involved in the deneddylation of non-cullin subunits such as STON2. The complex is also involved in phosphorylation of p53/TP53, c-jun/JUN, IkappaBalpha/NFKBIA, ITPK1, IRF8/ICSBP and SNAPIN, possibly via its association with CK2 and PKD kinases. CSN-dependent phosphorylation of TP53 and JUN promotes and protects degradation by the Ubl system, respectively. In Mus musculus (Mouse), this protein is COP9 signalosome complex subunit 4 (Cops4).